The primary structure comprises 208 residues: MAVYVVDHPLVRHKIGILRMESTSTSEFRSVSNEVARLLIYEATKGFRTEKHTVQGWAGPVEIEAISGKKVTVVPILRAGLGLMDGVLDMIPGAKISVVGLYRNEETLEPVEYYVKLASDMDQRLAIILDPMLATGGSLIATIELLKRHGCRQICSLNLVCAPEGIAKVEAAHPDVDIYTAAIDDHLNEQGYIIPGLGDAGDRIFGTK.

Residues arginine 78, arginine 103, and 130-138 (DPMLATGGS) each bind 5-phospho-alpha-D-ribose 1-diphosphate. Uracil-binding positions include isoleucine 193 and 198-200 (GDA). Aspartate 199 lines the 5-phospho-alpha-D-ribose 1-diphosphate pocket.

It belongs to the UPRTase family. Requires Mg(2+) as cofactor.

The catalysed reaction is UMP + diphosphate = 5-phospho-alpha-D-ribose 1-diphosphate + uracil. It participates in pyrimidine metabolism; UMP biosynthesis via salvage pathway; UMP from uracil: step 1/1. With respect to regulation, allosterically activated by GTP. Functionally, catalyzes the conversion of uracil and 5-phospho-alpha-D-ribose 1-diphosphate (PRPP) to UMP and diphosphate. In Desulfovibrio desulfuricans (strain ATCC 27774 / DSM 6949 / MB), this protein is Uracil phosphoribosyltransferase.